The sequence spans 2157 residues: Mediator of RNA polymerase II transcription subunit 12-like protein (2157 aa).

A disordered region spans residues 1-31 (MAAFGLLSYEQRPLKRPRLGPPDVYPQDPKQ). Position 462 is a phosphothreonine (threonine 462). Residues 1437-1456 (ELEKGQHLGSSSKKERDRQK) are compositionally biased toward basic and acidic residues. 3 disordered regions span residues 1437 to 1461 (ELEKGQHLGSSSKKERDRQKQKSMS), 1724 to 1807 (RSYY…SQMT), and 2040 to 2157 (IDAV…PSHF). Basic residues predominate over residues 1771-1780 (TKGRKRKTKS). Low complexity-rich tracts occupy residues 2063 to 2076 (PRQQQVRQQQRLLQ), 2083 to 2101 (QQPQQAPQPQQPSQTQSQA), and 2116 to 2136 (RQGLQQTQQQQQTAALVRQLQ). A compositionally biased stretch (polar residues) spans 2137–2148 (KQLSSNQPQQGV).

The protein belongs to the Mediator complex subunit 12 family. In terms of assembly, may be a component of the Mediator complex, which is known to be composed of MED1, MED4, MED6, MED7, MED8, MED9, MED10, MED11, MED12, MED13, MED13L, MED14, MED15, MED16, MED17, MED18, MED19, MED20, MED21, MED22, MED23, MED24, MED25, MED26, MED27, MED29, MED30, MED31, CCNC, CDK8 and CDC2L6/CDK11. The MED12, MED13, CCNC and CDK8 subunits form a distinct module termed the CDK8 module. Mediator containing the CDK8 module is less active than Mediator lacking this module in supporting transcriptional activation. Individual preparations of the Mediator complex lacking one or more distinct subunits have been variously termed ARC, CRSP, DRIP, PC2, SMCC and TRAP.

The protein localises to the nucleus. May be a component of the Mediator complex, a coactivator involved in the regulated transcription of nearly all RNA polymerase II-dependent genes. Mediator functions as a bridge to convey information from gene-specific regulatory proteins to the basal RNA polymerase II transcription machinery. Mediator is recruited to promoters by direct interactions with regulatory proteins and serves as a scaffold for the assembly of a functional preinitiation complex with RNA polymerase II and the general transcription factors. This Mus musculus (Mouse) protein is Mediator of RNA polymerase II transcription subunit 12-like protein (Med12l).